A 635-amino-acid polypeptide reads, in one-letter code: Early transcription factor 70 kDa subunit (635 aa).

Positions R32–E185 constitute a Helicase ATP-binding domain. Position 45-52 (H45–T52) interacts with ATP. The DEXH box signature appears at D135–H138.

It belongs to the helicase family. VETF subfamily. Heterodimer of a 70 kDa and a 82 kDa subunit. Part of the early transcription complex composed of ETF, RAP94, and the DNA-directed RNA polymerase.

It localises to the virion. In terms of biological role, acts with RNA polymerase to initiate transcription from early gene promoters. Is recruited by the RPO-associated protein of 94 kDa (RAP94) to form the early transcription complex, which also contains the core RNA polymerase. ETF heterodimer binds to early gene promoters. This chain is Early transcription factor 70 kDa subunit (VETFS), found in Homo sapiens (Human).